The following is a 91-amino-acid chain: Small ribosomal subunit protein uS15c (91 aa).

Belongs to the universal ribosomal protein uS15 family. As to quaternary structure, part of the 30S ribosomal subunit.

The protein resides in the plastid. It localises to the chloroplast. This chain is Small ribosomal subunit protein uS15c (rps15), found in Ceratophyllum demersum (Rigid hornwort).